Here is a 123-residue protein sequence, read N- to C-terminus: Large ribosomal subunit protein uL29 (123 aa).

This sequence belongs to the universal ribosomal protein uL29 family. Component of the large ribosomal subunit.

It is found in the cytoplasm. Its function is as follows. Component of the large ribosomal subunit. The ribosome is a large ribonucleoprotein complex responsible for the synthesis of proteins in the cell. This Ictalurus punctatus (Channel catfish) protein is Large ribosomal subunit protein uL29 (rpl35).